The following is a 214-amino-acid chain: Ribonuclease HII (214 aa).

The 189-residue stretch at 26 to 214 folds into the RNase H type-2 domain; the sequence is EIVCGVDEAG…PVRAALDLIR (189 aa). A divalent metal cation contacts are provided by D32, E33, and D124.

This sequence belongs to the RNase HII family. It depends on Mn(2+) as a cofactor. Mg(2+) is required as a cofactor.

It is found in the cytoplasm. The enzyme catalyses Endonucleolytic cleavage to 5'-phosphomonoester.. In terms of biological role, endonuclease that specifically degrades the RNA of RNA-DNA hybrids. In Burkholderia cenocepacia (strain HI2424), this protein is Ribonuclease HII.